The chain runs to 268 residues: 4-hydroxy-tetrahydrodipicolinate reductase (268 aa).

Residues G8–M13, D34, G95–T97, and A121–F124 each bind NAD(+). H151 acts as the Proton donor/acceptor in catalysis. A (S)-2,3,4,5-tetrahydrodipicolinate-binding site is contributed by H152. The Proton donor role is filled by K155. (S)-2,3,4,5-tetrahydrodipicolinate is bound at residue G161–T162.

This sequence belongs to the DapB family.

Its subcellular location is the cytoplasm. The catalysed reaction is (S)-2,3,4,5-tetrahydrodipicolinate + NAD(+) + H2O = (2S,4S)-4-hydroxy-2,3,4,5-tetrahydrodipicolinate + NADH + H(+). It catalyses the reaction (S)-2,3,4,5-tetrahydrodipicolinate + NADP(+) + H2O = (2S,4S)-4-hydroxy-2,3,4,5-tetrahydrodipicolinate + NADPH + H(+). It participates in amino-acid biosynthesis; L-lysine biosynthesis via DAP pathway; (S)-tetrahydrodipicolinate from L-aspartate: step 4/4. Catalyzes the conversion of 4-hydroxy-tetrahydrodipicolinate (HTPA) to tetrahydrodipicolinate. The polypeptide is 4-hydroxy-tetrahydrodipicolinate reductase (Dictyoglomus turgidum (strain DSM 6724 / Z-1310)).